A 199-amino-acid chain; its full sequence is Imidazole glycerol phosphate synthase subunit HisH (199 aa).

The Glutamine amidotransferase type-1 domain maps to 3–199 (NITIIDTGCA…LKNFVEKVPF (197 aa)). Cys-78 serves as the catalytic Nucleophile. Active-site residues include His-178 and Glu-180.

Heterodimer of HisH and HisF.

Its subcellular location is the cytoplasm. The catalysed reaction is 5-[(5-phospho-1-deoxy-D-ribulos-1-ylimino)methylamino]-1-(5-phospho-beta-D-ribosyl)imidazole-4-carboxamide + L-glutamine = D-erythro-1-(imidazol-4-yl)glycerol 3-phosphate + 5-amino-1-(5-phospho-beta-D-ribosyl)imidazole-4-carboxamide + L-glutamate + H(+). The enzyme catalyses L-glutamine + H2O = L-glutamate + NH4(+). It functions in the pathway amino-acid biosynthesis; L-histidine biosynthesis; L-histidine from 5-phospho-alpha-D-ribose 1-diphosphate: step 5/9. In terms of biological role, IGPS catalyzes the conversion of PRFAR and glutamine to IGP, AICAR and glutamate. The HisH subunit catalyzes the hydrolysis of glutamine to glutamate and ammonia as part of the synthesis of IGP and AICAR. The resulting ammonia molecule is channeled to the active site of HisF. This is Imidazole glycerol phosphate synthase subunit HisH from Haemophilus influenzae (strain 86-028NP).